A 154-amino-acid chain; its full sequence is UPF0178 protein Gbem_2221 (154 aa).

The protein belongs to the UPF0178 family.

In Citrifermentans bemidjiense (strain ATCC BAA-1014 / DSM 16622 / JCM 12645 / Bem) (Geobacter bemidjiensis), this protein is UPF0178 protein Gbem_2221.